We begin with the raw amino-acid sequence, 419 residues long: Probable dual-specificity RNA methyltransferase RlmN (419 aa).

The segment at 1 to 21 (MTAESDSPDGPVSAGTGRPVR) is disordered. The active-site Proton acceptor is the Glu124. One can recognise a Radical SAM core domain in the interval 130–369 (YPDRATVCVS…ATTVRDTRGR (240 aa)). An intrachain disulfide couples Cys137 to Cys375. [4Fe-4S] cluster contacts are provided by Cys144, Cys148, and Cys151. S-adenosyl-L-methionine is bound by residues 199-200 (GE), Ser233, 256-258 (SLH), and Asn332. Cys375 (S-methylcysteine intermediate) is an active-site residue. Residues 383–419 (AGRARRVESARPVESARPVGVAGAASGSPAHGSRVLR) are disordered. Positions 397–419 (SARPVGVAGAASGSPAHGSRVLR) are enriched in low complexity.

It belongs to the radical SAM superfamily. RlmN family. Requires [4Fe-4S] cluster as cofactor.

It localises to the cytoplasm. It catalyses the reaction adenosine(2503) in 23S rRNA + 2 reduced [2Fe-2S]-[ferredoxin] + 2 S-adenosyl-L-methionine = 2-methyladenosine(2503) in 23S rRNA + 5'-deoxyadenosine + L-methionine + 2 oxidized [2Fe-2S]-[ferredoxin] + S-adenosyl-L-homocysteine. The catalysed reaction is adenosine(37) in tRNA + 2 reduced [2Fe-2S]-[ferredoxin] + 2 S-adenosyl-L-methionine = 2-methyladenosine(37) in tRNA + 5'-deoxyadenosine + L-methionine + 2 oxidized [2Fe-2S]-[ferredoxin] + S-adenosyl-L-homocysteine. Specifically methylates position 2 of adenine 2503 in 23S rRNA and position 2 of adenine 37 in tRNAs. This Frankia alni (strain DSM 45986 / CECT 9034 / ACN14a) protein is Probable dual-specificity RNA methyltransferase RlmN.